The chain runs to 767 residues: Cilia- and flagella-associated protein 91 (767 aa).

The interval 1–29 (MSHAVTIEEPQAQPQVSQTRYRERSRAGS) is disordered.

Belongs to the CFAP91 family. Interacts with MYCBP and AKAP1. Part of a complex containing MYCBP, AKAP1 and PRKAR2B. Interacts with CFAP61. As to quaternary structure, does not interact with MYCBP. In terms of processing, phosphorylated by PKA. As to expression, strongly expressed in the liver. Widely expressed, but strongly expressed in all spermatogenesis-related tissues, including the testis, the epithelium of cauda and the corpus epididymis, as well as the spermatid and mature sperm. Also expressed in Leydig cells.

The protein localises to the mitochondrion. Its subcellular location is the cytoplasm. It localises to the cytoskeleton. It is found in the cilium axoneme. Involved in sperm flagellum axonemal organization and function. May regulate cilium motility through its role in the assembly of the axonemal radial spokes. The protein is Cilia- and flagella-associated protein 91 of Homo sapiens (Human).